The primary structure comprises 628 residues: MDSVVFEDVAVDFTLEEWALLDSAQRDLYRDVMLETFQNLASVDDETQFKASGSVSQQDIYGEKIPKESKIATFTRNVSWASVLGKIWDSLSIEDQTTNQGRNLSRNHGLERLCESNDQCGEALSQIPHLNLYKKIPPGVKQYEYNTYGKVFMHRRTSLKSPITVHTGHKPYQCQECGQAYSCRSHLRMHVRTHNGERPYVCKLCGKTFPRTSSLNRHVRIHTAEKTYECKQCGKAFIDFSSLTSHLRSHTGEKPYKCKECGKAFSYSSTFRRHTITHTGEKPYKCKECAEAFSYSSTFRRHMISHTGEKPHKCKECGEAFSYSSAFRRHMITHTGEKPYECKQCGKTFIYLQSFRRHERIHTGEKPYECKQCGKTFIYPQSFRRHERTHGGEKPYECNQCGKAFSHPSSFRGHMRVHTGEKPYECKQCGKTFNWPISLRKHMRTHTREKPYECKQCGKAFSLSACFREHVRMHPEDKSYECKLCGKAFYCHISLQKHMRRHTAEKLYKCKQCGKAFSWPELLQQHVRTHTVEKPYECKECGKVFKWPSSLPIHMRLHTGEKPYQCKHCGKAFNCSSSLRRHVRIHTTEKQYKCNVGHPPANEFMCSASEKSHQERDLIKVVNMVLPL.

Residues 4–77 (VVFEDVAVDF…ESKIATFTRN (74 aa)) form the KRAB domain. The C2H2-type 1; degenerate zinc finger occupies 172-194 (YQCQECGQAYSCRSHLRMHVRTH). 14 consecutive C2H2-type zinc fingers follow at residues 200 to 222 (YVCKLCGKTFPRTSSLNRHVRIH), 228 to 250 (YECKQCGKAFIDFSSLTSHLRSH), 256 to 278 (YKCKECGKAFSYSSTFRRHTITH), 284 to 306 (YKCKECAEAFSYSSTFRRHMISH), 312 to 334 (HKCKECGEAFSYSSAFRRHMITH), 340 to 362 (YECKQCGKTFIYLQSFRRHERIH), 368 to 390 (YECKQCGKTFIYPQSFRRHERTH), 396 to 418 (YECNQCGKAFSHPSSFRGHMRVH), 424 to 446 (YECKQCGKTFNWPISLRKHMRTH), 452 to 474 (YECKQCGKAFSLSACFREHVRMH), 480 to 502 (YECKLCGKAFYCHISLQKHMRRH), 508 to 530 (YKCKQCGKAFSWPELLQQHVRTH), 536 to 558 (YECKECGKVFKWPSSLPIHMRLH), and 564 to 586 (YQCKHCGKAFNCSSSLRRHVRIH).

It belongs to the krueppel C2H2-type zinc-finger protein family.

It is found in the nucleus. Functionally, may be involved in transcriptional regulation. This is Zinc finger protein 555 (ZNF555) from Homo sapiens (Human).